Consider the following 125-residue polypeptide: Secretion system apparatus protein SsaO (125 aa).

The chain is Secretion system apparatus protein SsaO (ssaO) from Salmonella typhimurium (strain LT2 / SGSC1412 / ATCC 700720).